Reading from the N-terminus, the 255-residue chain is Indole-3-glycerol phosphate synthase (255 aa).

The protein belongs to the TrpC family.

The enzyme catalyses 1-(2-carboxyphenylamino)-1-deoxy-D-ribulose 5-phosphate + H(+) = (1S,2R)-1-C-(indol-3-yl)glycerol 3-phosphate + CO2 + H2O. Its pathway is amino-acid biosynthesis; L-tryptophan biosynthesis; L-tryptophan from chorismate: step 4/5. This chain is Indole-3-glycerol phosphate synthase, found in Streptococcus thermophilus (strain ATCC BAA-491 / LMD-9).